The chain runs to 177 residues: Large ribosomal subunit protein uL6 (177 aa).

Belongs to the universal ribosomal protein uL6 family. As to quaternary structure, part of the 50S ribosomal subunit.

Its function is as follows. This protein binds to the 23S rRNA, and is important in its secondary structure. It is located near the subunit interface in the base of the L7/L12 stalk, and near the tRNA binding site of the peptidyltransferase center. The polypeptide is Large ribosomal subunit protein uL6 (Rickettsia canadensis (strain McKiel)).